Here is a 247-residue protein sequence, read N- to C-terminus: ATP synthase subunit a, chloroplastic (247 aa).

5 helical membrane-spanning segments follow: residues Gln-38–Val-58, Val-95–Leu-115, Ile-134–Thr-154, Leu-199–Leu-219, and Gly-220–Gly-240.

The protein belongs to the ATPase A chain family. In terms of assembly, F-type ATPases have 2 components, CF(1) - the catalytic core - and CF(0) - the membrane proton channel. CF(1) has five subunits: alpha(3), beta(3), gamma(1), delta(1), epsilon(1). CF(0) has four main subunits: a, b, b' and c.

It localises to the plastid. Its subcellular location is the chloroplast thylakoid membrane. Its function is as follows. Key component of the proton channel; it plays a direct role in the translocation of protons across the membrane. The chain is ATP synthase subunit a, chloroplastic from Morus indica (Mulberry).